The following is a 557-amino-acid chain: Potassium-transporting ATPase potassium-binding subunit (557 aa).

Helical transmembrane passes span 1-21 (MEIL…IPIG), 62-82 (QYIF…YIIL), 132-152 (IVIT…ALAF), 176-196 (ILLP…VPQT), 253-273 (VQII…GHMI), 279-299 (AVAI…ICFS), 371-391 (IFGG…LTVF), 415-435 (LVAF…ALAL), 482-502 (VSAG…LLAV), and 528-548 (VTLI…AVAL).

Belongs to the KdpA family. In terms of assembly, the system is composed of three essential subunits: KdpA, KdpB and KdpC.

The protein localises to the cell membrane. Functionally, part of the high-affinity ATP-driven potassium transport (or Kdp) system, which catalyzes the hydrolysis of ATP coupled with the electrogenic transport of potassium into the cytoplasm. This subunit binds the extracellular potassium ions and delivers the ions to the membrane domain of KdpB through an intramembrane tunnel. This is Potassium-transporting ATPase potassium-binding subunit from Clostridium acetobutylicum (strain ATCC 824 / DSM 792 / JCM 1419 / IAM 19013 / LMG 5710 / NBRC 13948 / NRRL B-527 / VKM B-1787 / 2291 / W).